The sequence spans 381 residues: Beta-lactamase CMY-2 (381 aa).

An N-terminal signal peptide occupies residues 1–20 (MMKKSLCCALLLTASFSTFA). The active-site Acyl-ester intermediate is S84. 4 residues coordinate a beta-lactam: S84, Q140, Y170, and N172.

Belongs to the class-C beta-lactamase family.

The catalysed reaction is a beta-lactam + H2O = a substituted beta-amino acid. With respect to regulation, inhibited by the beta-lactamase-blocking agents sulbactam, tazobactam, avibactam and 3-aminophenylboronic acid (APB). In terms of biological role, class C beta-lactamase which confers resistance to penicillins and cephalosporins. Has nitrocefin-, cefoxitin- and cefoperazone-hydrolyzing activities. The polypeptide is Beta-lactamase CMY-2 (Klebsiella pneumoniae).